The chain runs to 260 residues: 6-carboxyhexanoate--CoA ligase (260 aa).

The protein belongs to the BioW family. As to quaternary structure, homodimer. The cofactor is Mg(2+).

It carries out the reaction heptanedioate + ATP + CoA = 6-carboxyhexanoyl-CoA + AMP + diphosphate. The protein operates within metabolic intermediate metabolism; pimeloyl-CoA biosynthesis; pimeloyl-CoA from pimelate: step 1/1. Catalyzes the transformation of pimelate into pimeloyl-CoA with concomitant hydrolysis of ATP to AMP. This chain is 6-carboxyhexanoate--CoA ligase, found in Fibrobacter succinogenes (strain ATCC 19169 / S85).